A 353-amino-acid chain; its full sequence is Delta-aminolevulinic acid dehydratase (353 aa).

Catalysis depends on K221, which acts as the Schiff-base intermediate with substrate. 5-aminolevulinate-binding residues include R231 and K244. A Mg(2+)-binding site is contributed by E260. K275 (schiff-base intermediate with substrate) is an active-site residue. The 5-aminolevulinate site is built by S301 and Y340.

The protein belongs to the ALAD family. In terms of assembly, homooctamer. Requires Mg(2+) as cofactor.

The catalysed reaction is 2 5-aminolevulinate = porphobilinogen + 2 H2O + H(+). The protein operates within porphyrin-containing compound metabolism; protoporphyrin-IX biosynthesis; coproporphyrinogen-III from 5-aminolevulinate: step 1/4. In terms of biological role, catalyzes an early step in the biosynthesis of tetrapyrroles. Binds two molecules of 5-aminolevulinate per subunit, each at a distinct site, and catalyzes their condensation to form porphobilinogen. Required for nodule development. This Bradyrhizobium diazoefficiens (strain JCM 10833 / BCRC 13528 / IAM 13628 / NBRC 14792 / USDA 110) protein is Delta-aminolevulinic acid dehydratase (hemB).